Reading from the N-terminus, the 122-residue chain is MARIAGVNIPTAKRVVIALTYIHGIGPKFAQEIVEKVGIPAERRVHQLTDAEVLQIREAIDRDYQVEGDLRRDTAMNIKRLMDLGCYRGLRHRRGLPVRGQRTHTNARTRKGPAKAIAGKKK.

Positions 99 to 122 are disordered; the sequence is RGQRTHTNARTRKGPAKAIAGKKK.

Belongs to the universal ribosomal protein uS13 family. As to quaternary structure, part of the 30S ribosomal subunit. Forms a loose heterodimer with protein S19. Forms two bridges to the 50S subunit in the 70S ribosome.

In terms of biological role, located at the top of the head of the 30S subunit, it contacts several helices of the 16S rRNA. In the 70S ribosome it contacts the 23S rRNA (bridge B1a) and protein L5 of the 50S subunit (bridge B1b), connecting the 2 subunits; these bridges are implicated in subunit movement. Contacts the tRNAs in the A and P-sites. The chain is Small ribosomal subunit protein uS13 from Rhizobium leguminosarum bv. trifolii (strain WSM2304).